A 239-amino-acid chain; its full sequence is Large ribosomal subunit protein uL2 (239 aa).

Positions 203-239 (PFGGKEHHPGKPTTTSRRAPPGRKVGHIAARRTGRRK) are disordered. Residues 222 to 239 (PPGRKVGHIAARRTGRRK) are compositionally biased toward basic residues.

Belongs to the universal ribosomal protein uL2 family. Part of the 50S ribosomal subunit. Forms a bridge to the 30S subunit in the 70S ribosome.

In terms of biological role, one of the primary rRNA binding proteins. Required for association of the 30S and 50S subunits to form the 70S ribosome, for tRNA binding and peptide bond formation. It has been suggested to have peptidyltransferase activity; this is somewhat controversial. Makes several contacts with the 16S rRNA in the 70S ribosome. The sequence is that of Large ribosomal subunit protein uL2 from Pyrococcus abyssi (strain GE5 / Orsay).